We begin with the raw amino-acid sequence, 536 residues long: MFS-type efflux pump MFS1 (536 aa).

3 consecutive transmembrane segments (helical) span residues 30–50, 80–100, and 102–122; these read VTGL…LLVA, YLLT…FFPV, and WVFL…GAAP. Asn123 carries an N-linked (GlcNAc...) asparagine glycan. 3 consecutive transmembrane segments (helical) span residues 133 to 153, 163 to 183, and 191 to 211; these read VAGI…AYSI, GAIG…GGAF, and WCFY…LIFL. Asn221 carries N-linked (GlcNAc...) asparagine glycosylation. Helical transmembrane passes span 234–254, 264–284, 306–326, 342–362, 366–386, 400–420, 426–446, and 503–523; these read IGTA…QWGG, IIAL…FQIR, FFLF…PIWF, IPMV…VTAI, APLY…LTTF, IIFG…AQAV, VAVG…LFVS, and TWYV…GMEW.

This sequence belongs to the major facilitator superfamily. TCR/Tet family.

It is found in the cell membrane. Its function is as follows. MFS-type efflux pump involved in the modulation susceptibility to azoles, including fluconazole, itraconazole, miconazole and voriconazole. Also confers increased resistance chloramphenicol and thiamphenicol, suggesting that it acts as a pleiotropic drug transporter with a broad substrate spectrum. Finally, increases the tolerance to cycloheximide when expressed in S.cerevisiae, but not in dermatophyte species. This chain is MFS-type efflux pump MFS1, found in Arthroderma benhamiae (strain ATCC MYA-4681 / CBS 112371) (Trichophyton mentagrophytes).